An 891-amino-acid chain; its full sequence is DNA mismatch repair protein MutS (891 aa).

An ATP-binding site is contributed by Gly634 to Ser641.

Belongs to the DNA mismatch repair MutS family.

Its function is as follows. This protein is involved in the repair of mismatches in DNA. It is possible that it carries out the mismatch recognition step. This protein has a weak ATPase activity. In Burkholderia pseudomallei (strain 1106a), this protein is DNA mismatch repair protein MutS.